The chain runs to 341 residues: Ribosomal RNA small subunit methyltransferase H (341 aa).

Residues 47-49, Asp64, Phe91, Asp109, and Gln116 contribute to the S-adenosyl-L-methionine site; that span reads GGY.

The protein belongs to the methyltransferase superfamily. RsmH family.

The protein resides in the cytoplasm. The catalysed reaction is cytidine(1402) in 16S rRNA + S-adenosyl-L-methionine = N(4)-methylcytidine(1402) in 16S rRNA + S-adenosyl-L-homocysteine + H(+). In terms of biological role, specifically methylates the N4 position of cytidine in position 1402 (C1402) of 16S rRNA. The polypeptide is Ribosomal RNA small subunit methyltransferase H (Agrobacterium fabrum (strain C58 / ATCC 33970) (Agrobacterium tumefaciens (strain C58))).